A 305-amino-acid chain; its full sequence is Dermonecrotic toxin LiSicTox-betaID1 (305 aa).

The N-terminal stretch at 1 to 18 is a signal peptide; sequence MQLFIILCLAGSAVQLEG. A propeptide spanning residues 19-26 is cleaved from the precursor; it reads TELDGVER. His-38 is a catalytic residue. Positions 58 and 60 each coordinate Mg(2+). His-74 acts as the Nucleophile in catalysis. Cystine bridges form between Cys-78–Cys-84 and Cys-80–Cys-223. Position 118 (Asp-118) interacts with Mg(2+).

Belongs to the arthropod phospholipase D family. Class II subfamily. Class IIb sub-subfamily. Requires Mg(2+) as cofactor. As to expression, expressed by the venom gland.

It is found in the secreted. It carries out the reaction an N-(acyl)-sphingosylphosphocholine = an N-(acyl)-sphingosyl-1,3-cyclic phosphate + choline. It catalyses the reaction an N-(acyl)-sphingosylphosphoethanolamine = an N-(acyl)-sphingosyl-1,3-cyclic phosphate + ethanolamine. The enzyme catalyses a 1-acyl-sn-glycero-3-phosphocholine = a 1-acyl-sn-glycero-2,3-cyclic phosphate + choline. The catalysed reaction is a 1-acyl-sn-glycero-3-phosphoethanolamine = a 1-acyl-sn-glycero-2,3-cyclic phosphate + ethanolamine. Dermonecrotic toxins cleave the phosphodiester linkage between the phosphate and headgroup of certain phospholipids (sphingolipid and lysolipid substrates), forming an alcohol (often choline) and a cyclic phosphate. This toxin acts on sphingomyelin (SM) with low activity. It may also act on ceramide phosphoethanolamine (CPE), lysophosphatidylcholine (LPC) and lysophosphatidylethanolamine (LPE), but not on lysophosphatidylserine (LPS), and lysophosphatidylglycerol (LPG). It acts by transphosphatidylation, releasing exclusively cyclic phosphate products as second products. Has no or weak activities in inducing dermonecrosis, hemolysis, inflammatory response, platelet aggregation and increase in vessel permeability. In vivo, shows no lethality when injected at higher dose into mice. The protein is Dermonecrotic toxin LiSicTox-betaID1 of Loxosceles intermedia (Brown spider).